The primary structure comprises 966 residues: Aminopeptidase N (966 aa).

Residues 1 to 8 (MAKGFYIS) lie on the Cytoplasmic side of the membrane. The chain crosses the membrane as a helical; Signal-anchor for type II membrane protein span at residues 9 to 32 (KTLGILGILLGVAAVCTIIALSVV). A cytosolic Ser/Thr-rich junction region spans residues 33 to 68 (YAQEKNRNAENSATAPTLPGSTSATTATTTPAVDES). Residues 33-966 (YAQEKNRNAE…VFKWFTENSS (934 aa)) are Extracellular-facing. The interval 42–64 (ENSATAPTLPGSTSATTATTTPA) is disordered. The span at 44–64 (SATAPTLPGSTSATTATTTPA) shows a compositional bias: low complexity. The interval 69–966 (KPWNQYRLPK…VFKWFTENSS (898 aa)) is metalloprotease. N106, N114, and N128 each carry an N-linked (GlcNAc...) asparagine glycan. Position 176 is a sulfotyrosine (Y176). N-linked (GlcNAc...) asparagine glycosylation is found at N234, N288, N318, and N332. 351-355 (GAMEN) is a substrate binding site. Residue H387 participates in Zn(2+) binding. E388 functions as the Proton acceptor in the catalytic mechanism. The Zn(2+) site is built by H391 and E410. Residues Y418 and Y423 each carry the sulfotyrosine modification. Residues N573, N606, N624, and N734 are each glycosylated (N-linked (GlcNAc...) asparagine). A disulfide bridge links C760 with C767. N784 and N817 each carry an N-linked (GlcNAc...) asparagine glycan. A disulfide bridge links C797 with C833. Position 852 is a phosphotyrosine (Y852).

It belongs to the peptidase M1 family. Homodimer. Interacts with SLC6A19. The cofactor is Zn(2+). Post-translationally, N- and O-glycosylated. Sulfated. In terms of processing, may undergo proteolysis and give rise to a soluble form. As to expression, expressed in the intestinal brush border (at protein level). Highly expressed in intestinal tract and kidney, present in liver, lymph node, spleen, and brain. Found as well in monocytes, macrophages, dendritic cells, veiled cells and B-cells but not on T-cells and thymocytes.

Its subcellular location is the cell membrane. The enzyme catalyses Release of an N-terminal amino acid, Xaa-|-Yaa- from a peptide, amide or arylamide. Xaa is preferably Ala, but may be most amino acids including Pro (slow action). When a terminal hydrophobic residue is followed by a prolyl residue, the two may be released as an intact Xaa-Pro dipeptide.. Its function is as follows. Broad specificity aminopeptidase which plays a role in the final digestion of peptides generated from hydrolysis of proteins by gastric and pancreatic proteases. Also involved in the processing of various peptides including peptide hormones, such as angiotensin III and IV, neuropeptides, and chemokines. May also be involved the cleavage of peptides bound to major histocompatibility complex class II molecules of antigen presenting cells. May have a role in angiogenesis and promote cholesterol crystallization. May have a role in amino acid transport by acting as binding partner of amino acid transporter SLC6A19 and regulating its activity. This Mus musculus (Mouse) protein is Aminopeptidase N (Anpep).